The sequence spans 311 residues: Probable manganese-dependent inorganic pyrophosphatase (311 aa).

The Mn(2+) site is built by H9, D13, D15, D77, H99, and D151.

It belongs to the PPase class C family. Mn(2+) serves as cofactor.

It localises to the cytoplasm. It carries out the reaction diphosphate + H2O = 2 phosphate + H(+). The protein is Probable manganese-dependent inorganic pyrophosphatase of Streptococcus suis (strain 98HAH33).